The primary structure comprises 175 residues: ATP synthase subunit b, chloroplastic (175 aa).

A helical transmembrane segment spans residues 22 to 42; that stretch reads VFETNIINLAAVVGIVVSFVG.

The protein belongs to the ATPase B chain family. As to quaternary structure, F-type ATPases have 2 components, F(1) - the catalytic core - and F(0) - the membrane proton channel. F(1) has five subunits: alpha(3), beta(3), gamma(1), delta(1), epsilon(1). F(0) has four main subunits: a(1), b(1), b'(1) and c(10-14). The alpha and beta chains form an alternating ring which encloses part of the gamma chain. F(1) is attached to F(0) by a central stalk formed by the gamma and epsilon chains, while a peripheral stalk is formed by the delta, b and b' chains.

It localises to the plastid. The protein localises to the chloroplast thylakoid membrane. In terms of biological role, f(1)F(0) ATP synthase produces ATP from ADP in the presence of a proton or sodium gradient. F-type ATPases consist of two structural domains, F(1) containing the extramembraneous catalytic core and F(0) containing the membrane proton channel, linked together by a central stalk and a peripheral stalk. During catalysis, ATP synthesis in the catalytic domain of F(1) is coupled via a rotary mechanism of the central stalk subunits to proton translocation. Functionally, component of the F(0) channel, it forms part of the peripheral stalk, linking F(1) to F(0). The sequence is that of ATP synthase subunit b, chloroplastic from Chlamydomonas reinhardtii (Chlamydomonas smithii).